Here is a 251-residue protein sequence, read N- to C-terminus: Glutamate 5-kinase (251 aa).

Lysine 7 is a binding site for ATP. Residues serine 45, aspartate 130, and asparagine 142 each coordinate substrate. ATP contacts are provided by residues 162 to 163 (SD) and 204 to 210 (TGGIVTK).

Belongs to the glutamate 5-kinase family.

The protein resides in the cytoplasm. It catalyses the reaction L-glutamate + ATP = L-glutamyl 5-phosphate + ADP. It functions in the pathway amino-acid biosynthesis; L-proline biosynthesis; L-glutamate 5-semialdehyde from L-glutamate: step 1/2. Catalyzes the transfer of a phosphate group to glutamate to form L-glutamate 5-phosphate. This chain is Glutamate 5-kinase, found in Campylobacter jejuni subsp. jejuni serotype O:6 (strain 81116 / NCTC 11828).